Reading from the N-terminus, the 197-residue chain is MVTKKQSRVPGRPRRFAPEQAISAAKVLFHQKGFDAVSVAEVTDYLGINPPSLYAAFGSKAGLFSRVLNEYVGTEAIPLADILRDDRPVGECLVEVLKEAARRYSQNGGCAGCMVLEGIHSHDPQARDIAVQYYHAAETTIYDYIARRHPQRAQCVTDFMSTVMSGLSAKAREGHSIEQLCATAAMAGEAIKTILEE.

Positions 15–75 (RFAPEQAISA…RVLNEYVGTE (61 aa)) constitute an HTH tetR-type domain. The segment at residues 38–57 (SVAEVTDYLGINPPSLYAAF) is a DNA-binding region (H-T-H motif).

Its function is as follows. Negatively regulates expression of bdcA. This is HTH-type transcriptional repressor BdcR (bdcR) from Escherichia coli (strain K12).